We begin with the raw amino-acid sequence, 485 residues long: Glutamyl-tRNA(Gln) amidotransferase subunit A (485 aa).

Catalysis depends on charge relay system residues Lys-79 and Ser-154. The active-site Acyl-ester intermediate is Ser-178.

This sequence belongs to the amidase family. GatA subfamily. Heterotrimer of A, B and C subunits.

The catalysed reaction is L-glutamyl-tRNA(Gln) + L-glutamine + ATP + H2O = L-glutaminyl-tRNA(Gln) + L-glutamate + ADP + phosphate + H(+). Functionally, allows the formation of correctly charged Gln-tRNA(Gln) through the transamidation of misacylated Glu-tRNA(Gln) in organisms which lack glutaminyl-tRNA synthetase. The reaction takes place in the presence of glutamine and ATP through an activated gamma-phospho-Glu-tRNA(Gln). The sequence is that of Glutamyl-tRNA(Gln) amidotransferase subunit A from Staphylococcus carnosus (strain TM300).